Here is a 121-residue protein sequence, read N- to C-terminus: Large ribosomal subunit protein uL14 (121 aa).

This sequence belongs to the universal ribosomal protein uL14 family. As to quaternary structure, part of the 50S ribosomal subunit. Forms a cluster with proteins L3 and L19. In the 70S ribosome, L14 and L19 interact and together make contacts with the 16S rRNA in bridges B5 and B8.

Its function is as follows. Binds to 23S rRNA. Forms part of two intersubunit bridges in the 70S ribosome. The chain is Large ribosomal subunit protein uL14 from Aquifex pyrophilus.